The following is a 604-amino-acid chain: Sulfite reductase [NADPH] flavoprotein alpha-component (604 aa).

The Flavodoxin-like domain maps to 65 to 203 (VTILYGSQTG…AAGQWHADVL (139 aa)). Residues 71–76 (SQTGNG), 118–121 (STHG), and 154–163 (LGDSSYEFFC) contribute to the FMN site. The 218-residue stretch at 236 to 453 (QNPYSAEVLV…VEPNKHFRLP (218 aa)) folds into the FAD-binding FR-type domain. Residues threonine 324, leucine 358, 392-395 (RLYS), 410-412 (TVA), and 425-428 (GGAS) contribute to the FAD site. Residues 524-525 (SR), 530-534 (KIYVQ), and aspartate 566 contribute to the NADP(+) site. Tyrosine 604 provides a ligand contact to FAD.

The protein belongs to the NADPH-dependent sulphite reductase flavoprotein subunit CysJ family. In the N-terminal section; belongs to the flavodoxin family. This sequence in the C-terminal section; belongs to the flavoprotein pyridine nucleotide cytochrome reductase family. As to quaternary structure, alpha(8)-beta(8). The alpha component is a flavoprotein, the beta component is a hemoprotein. FAD is required as a cofactor. Requires FMN as cofactor.

It carries out the reaction hydrogen sulfide + 3 NADP(+) + 3 H2O = sulfite + 3 NADPH + 4 H(+). It functions in the pathway sulfur metabolism; hydrogen sulfide biosynthesis; hydrogen sulfide from sulfite (NADPH route): step 1/1. Component of the sulfite reductase complex that catalyzes the 6-electron reduction of sulfite to sulfide. This is one of several activities required for the biosynthesis of L-cysteine from sulfate. The flavoprotein component catalyzes the electron flow from NADPH -&gt; FAD -&gt; FMN to the hemoprotein component. The chain is Sulfite reductase [NADPH] flavoprotein alpha-component from Shewanella sp. (strain MR-7).